The following is a 361-amino-acid chain: Transmembrane protein 116 (361 aa).

The next 7 membrane-spanning stretches (helical) occupy residues 29-49, 64-84, 103-123, 147-167, 210-230, 261-281, and 295-315; these read WIQM…ILYA, FLLS…GLLF, TLYM…YTGL, LGPV…FVAG, CMAI…IFMG, MVLY…LATM, and VALY…NCLV.

Its subcellular location is the membrane. This chain is Transmembrane protein 116 (tmem116), found in Danio rerio (Zebrafish).